Consider the following 189-residue polypeptide: Probable nicotinate-nucleotide adenylyltransferase (189 aa).

Belongs to the NadD family.

It catalyses the reaction nicotinate beta-D-ribonucleotide + ATP + H(+) = deamido-NAD(+) + diphosphate. It functions in the pathway cofactor biosynthesis; NAD(+) biosynthesis; deamido-NAD(+) from nicotinate D-ribonucleotide: step 1/1. In terms of biological role, catalyzes the reversible adenylation of nicotinate mononucleotide (NaMN) to nicotinic acid adenine dinucleotide (NaAD). In Bacillus cereus (strain AH820), this protein is Probable nicotinate-nucleotide adenylyltransferase.